Here is a 384-residue protein sequence, read N- to C-terminus: S-adenosylmethionine synthase (384 aa).

H15 serves as a coordination point for ATP. Residue D17 coordinates Mg(2+). E43 serves as a coordination point for K(+). Residues E56 and Q99 each coordinate L-methionine. The flexible loop stretch occupies residues 99 to 109; that stretch reads QSPDINQGVDR. Residues 164-166, 231-232, D240, 246-247, A263, and K267 contribute to the ATP site; these read DAK, RF, and RK. D240 provides a ligand contact to L-methionine. K271 lines the L-methionine pocket.

This sequence belongs to the AdoMet synthase family. In terms of assembly, homotetramer; dimer of dimers. It depends on Mg(2+) as a cofactor. K(+) serves as cofactor.

It is found in the cytoplasm. The enzyme catalyses L-methionine + ATP + H2O = S-adenosyl-L-methionine + phosphate + diphosphate. It functions in the pathway amino-acid biosynthesis; S-adenosyl-L-methionine biosynthesis; S-adenosyl-L-methionine from L-methionine: step 1/1. Functionally, catalyzes the formation of S-adenosylmethionine (AdoMet) from methionine and ATP. The overall synthetic reaction is composed of two sequential steps, AdoMet formation and the subsequent tripolyphosphate hydrolysis which occurs prior to release of AdoMet from the enzyme. In Shewanella piezotolerans (strain WP3 / JCM 13877), this protein is S-adenosylmethionine synthase.